Here is a 171-residue protein sequence, read N- to C-terminus: Translationally-controlled tumor protein homolog (171 aa).

Residues 1–171 (MIIYKDIITG…FKDGLEIEKC (171 aa)) enclose the TCTP domain.

Belongs to the TCTP family.

The protein resides in the cytoplasm. Involved in calcium binding and microtubule stabilization. The sequence is that of Translationally-controlled tumor protein homolog (tpt1) from Danio rerio (Zebrafish).